We begin with the raw amino-acid sequence, 588 residues long: Probable urocanate hydratase (588 aa).

Residues 1 to 15 are compositionally biased toward low complexity; that stretch reads MDTPSAAAETSEPSA. The segment at 1 to 22 is disordered; that stretch reads MDTPSAAAETSEPSAQWQAYRG. Residues 62 to 63, Gln140, 188 to 190, Glu208, Arg213, 254 to 255, 275 to 279, and Tyr334 each bind NAD(+); these read GG, GMG, NA, and QTSAH. Cys431 is a catalytic residue. Gly520 contributes to the NAD(+) binding site.

Belongs to the urocanase family. The cofactor is NAD(+).

The protein localises to the cytoplasm. The catalysed reaction is 4-imidazolone-5-propanoate = trans-urocanate + H2O. The protein operates within amino-acid degradation; L-histidine degradation into L-glutamate; N-formimidoyl-L-glutamate from L-histidine: step 2/3. Its function is as follows. Catalyzes the conversion of urocanate to 4-imidazolone-5-propionate. This is Probable urocanate hydratase from Halobacterium salinarum (strain ATCC 29341 / DSM 671 / R1).